A 246-amino-acid chain; its full sequence is Exosome complex component Rrp41 (246 aa).

It belongs to the RNase PH family. Rrp41 subfamily. As to quaternary structure, component of the archaeal exosome complex. Forms a hexameric ring-like arrangement composed of 3 Rrp41-Rrp42 heterodimers. The hexameric ring associates with a trimer of Rrp4 and/or Csl4 subunits.

Its subcellular location is the cytoplasm. Catalytic component of the exosome, which is a complex involved in RNA degradation. Has 3'-&gt;5' exoribonuclease activity. Can also synthesize heteromeric RNA-tails. The chain is Exosome complex component Rrp41 from Pyrobaculum arsenaticum (strain DSM 13514 / JCM 11321 / PZ6).